The chain runs to 42 residues: Thymosin beta-10 (42 aa).

Composition is skewed to basic and acidic residues over residues 1-25 (MADK…ETQE) and 33-42 (ETIEQEKQAK). The disordered stretch occupies residues 1–42 (MADKPDLGEINSFDKAKLKKTETQEKNTLPTKETIEQEKQAK). A2 bears the N-acetylalanine mark. Position 4 is an N6-acetyllysine (K4). Phosphoserine is present on S12. An N6-acetyllysine modification is found at K15. T21, T23, and T34 each carry phosphothreonine. K39 is subject to N6-acetyllysine.

This sequence belongs to the thymosin beta family. Distributed in numerous types of tissues, including thymus, spleen, lung, liver and muscle.

The protein resides in the cytoplasm. Its subcellular location is the cytoskeleton. In terms of biological role, plays an important role in the organization of the cytoskeleton. Binds to and sequesters actin monomers (G actin) and therefore inhibits actin polymerization. The sequence is that of Thymosin beta-10 (TMSB10) from Bos taurus (Bovine).